The chain runs to 661 residues: Peroxisomal acyl-coenzyme A oxidase 1 (661 aa).

Residue serine 26 is modified to Phosphoserine. Position 65 is an N6-acetyllysine (lysine 65). Lysine 89 and lysine 90 each carry N6-succinyllysine. Threonine 139 serves as a coordination point for FAD. Lysine 159 is modified (N6-succinyllysine). Residue glycine 178 participates in FAD binding. Lysine 216 carries the post-translational modification N6-acetyllysine. Position 241 is an N6-succinyllysine (lysine 241). Residues lysine 255, lysine 267, and lysine 272 each carry the N6-acetyllysine modification. Lysine 349 bears the N6-succinyllysine mark. Glutamate 421 (proton acceptor) is an active-site residue. Residues lysine 437 and lysine 446 each carry the N6-acetyllysine; alternate modification. N6-succinyllysine; alternate is present on residues lysine 437 and lysine 446. At lysine 500 the chain carries N6-acetyllysine. Residue lysine 512 is modified to N6-acetyllysine; alternate. Position 512 is an N6-succinyllysine; alternate (lysine 512). Lysine 542 is modified (N6-succinyllysine). At lysine 637 the chain carries N6-acetyllysine; alternate. Residue lysine 637 is modified to N6-succinyllysine; alternate. At lysine 643 the chain carries N6-succinyllysine. Serine 649 bears the Phosphoserine mark. The residue at position 652 (lysine 652) is an N6-acetyllysine. The residue at position 655 (lysine 655) is an N6-succinyllysine. The Microbody targeting signal signature appears at 659–661; sequence SKL.

The protein belongs to the acyl-CoA oxidase family. In terms of assembly, homodimer. The enzyme contains three components A, B and C, the latter two being produced from the first by a proteolytic cleavage. Interacts with LONP2. FAD is required as a cofactor. In terms of tissue distribution, expressed in Schwann cells. Expressed (at protein level) in liver.

Its subcellular location is the peroxisome. It carries out the reaction a 2,3-saturated acyl-CoA + O2 = a (2E)-enoyl-CoA + H2O2. It catalyses the reaction hexadecanoyl-CoA + O2 = (2E)-hexadecenoyl-CoA + H2O2. The catalysed reaction is dodecanoyl-CoA + O2 = (2E)-dodecenoyl-CoA + H2O2. The enzyme catalyses octanoyl-CoA + O2 = (2E)-octenoyl-CoA + H2O2. It carries out the reaction decanoyl-CoA + O2 = (2E)-decenoyl-CoA + H2O2. It catalyses the reaction tetradecanoyl-CoA + O2 = (2E)-tetradecenoyl-CoA + H2O2. The catalysed reaction is hexadecanedioyl-CoA + O2 = (2E)-hexadecenedioyl-CoA + H2O2. The enzyme catalyses tetracosanoyl-CoA + O2 = (2E)-tetracosenoyl-CoA + H2O2. It carries out the reaction glutaryl-CoA + O2 = (2E)-glutaconyl-CoA + H2O2. It catalyses the reaction hexanoyl-CoA + O2 = (2E)-hexenoyl-CoA + H2O2. The catalysed reaction is octadecanoyl-CoA + O2 = (2E)-octadecenoyl-CoA + H2O2. The enzyme catalyses (5Z,8Z,11Z,14Z,17Z)-eicosapentaenoyl-CoA + O2 = (2E,5Z,8Z,11Z,14Z,17Z)-icosahexaenoyl-CoA + H2O2. It carries out the reaction (6Z,9Z,12Z,15Z,18Z,21Z)-tetracosahexaenoyl-CoA + O2 = (2E,6Z,9Z,12Z,15Z,18Z,21Z)-tetracosaheptaenoyl-CoA + H2O2. Its pathway is lipid metabolism; peroxisomal fatty acid beta-oxidation. Involved in the initial and rate-limiting step of peroxisomal beta-oxidation of straight-chain saturated and unsaturated very-long-chain fatty acids. Catalyzes the desaturation of fatty acyl-CoAs such as palmitoyl-CoA (hexadecanoyl-CoA) to 2-trans-enoyl-CoAs ((2E)-enoyl-CoAs) such as (2E)-hexadecenoyl-CoA, and donates electrons directly to molecular oxygen (O(2)), thereby producing hydrogen peroxide (H(2)O(2)). Functionally, shows highest activity against medium-chain fatty acyl-CoAs. Shows optimum activity with a chain length of 10 carbons (decanoyl-CoA) in vitro. Its function is as follows. Is active against a much broader range of substrates and shows activity towards long-chain acyl-CoAs. This Rattus norvegicus (Rat) protein is Peroxisomal acyl-coenzyme A oxidase 1.